The following is an 831-amino-acid chain: Periplasmic nitrate reductase (831 aa).

The tat-type signal signal peptide spans 1–38; that stretch reads MSMARRDFIKQTAAAAAATVAGVPLTGYTQNIVTESEA. A 4Fe-4S Mo/W bis-MGD-type domain is found at 41-97; it reads LKWSKAPCRFCGTGCGVNVAVKDNQVVATHGDFNAEVNKGLNCVKGYFLSKIMYGSD. [4Fe-4S] cluster is bound by residues Cys-48, Cys-51, Cys-55, and Cys-83. Residues Lys-85, Gln-152, Asn-177, Cys-181, 214–221, 245–249, 264–266, Met-375, Gln-379, Asn-485, 511–512, Lys-534, Asp-561, and 721–730 each bind Mo-bis(molybdopterin guanine dinucleotide); these read WGSNMAEM, STFEH, QSD, SD, and TGRVLEHWHS. Position 797 (Trp-797) interacts with substrate. Residues Asn-805 and Lys-822 each coordinate Mo-bis(molybdopterin guanine dinucleotide).

The protein belongs to the prokaryotic molybdopterin-containing oxidoreductase family. NasA/NapA/NarB subfamily. As to quaternary structure, component of the periplasmic nitrate reductase NapAB complex composed of NapA and NapB. It depends on [4Fe-4S] cluster as a cofactor. The cofactor is Mo-bis(molybdopterin guanine dinucleotide). Predicted to be exported by the Tat system. The position of the signal peptide cleavage has not been experimentally proven.

It is found in the periplasm. It carries out the reaction 2 Fe(II)-[cytochrome] + nitrate + 2 H(+) = 2 Fe(III)-[cytochrome] + nitrite + H2O. Catalytic subunit of the periplasmic nitrate reductase complex NapAB. Receives electrons from NapB and catalyzes the reduction of nitrate to nitrite. The chain is Periplasmic nitrate reductase from Bordetella parapertussis (strain 12822 / ATCC BAA-587 / NCTC 13253).